Consider the following 267-residue polypeptide: Pro-opiomelanocortin (267 aa).

The signal sequence occupies residues 1–26; it reads MPRLCGSRSGALLLTLLLQASMGVRG. Residue F87 is modified to Phenylalanine amide. Disordered stretches follow at residues 88–156 and 215–242; these read GRRN…RPVK and KKDE…GFMT. A glycan (N-linked (GlcNAc...) asparagine) is linked at N91. Residues 94–105 show a composition bias toward gly residues; the sequence is SSGGGGGGGGAG. Positions 109–133 are excised as a propeptide; the sequence is EEEEVAAGEGPGPRGDGVAPGPRQD. Basic and acidic residues predominate over residues 131–143; sequence RQDKRSYSMEHFR. N-acetylserine; in Corticotropin is present on S136. Valine amide is present on V148. Basic and acidic residues predominate over residues 215–237; sequence KKDEGPYKMEHFRWGSPPKDKRY.

Belongs to the POMC family. Specific enzymatic cleavages at paired basic residues yield the different active peptides. ACTH and MSH are produced by the pituitary gland.

Its subcellular location is the secreted. Functionally, stimulates the adrenal glands to release cortisol. Its function is as follows. Anorexigenic peptide. Increases the pigmentation of skin by increasing melanin production in melanocytes. Increases the pigmentation of skin by increasing melanin production in melanocytes. In terms of biological role, endogenous orexigenic opiate. Functionally, endogenous opiate. The chain is Pro-opiomelanocortin (POMC) from Sus scrofa (Pig).